The sequence spans 126 residues: Larval cuticle protein 2 (126 aa).

An N-terminal signal peptide occupies residues 1-16 (MFKFVMVFAVLGLAAA). The region spanning 39–100 (ADGFDTDLVV…PVGAVLPTPP (62 aa)) is the Chitin-binding type R&amp;R domain.

Component of the larval cuticle. This is Larval cuticle protein 2 (Lcp2) from Drosophila miranda (Fruit fly).